The chain runs to 230 residues: Uracil-DNA glycosylase (230 aa).

Asp70 serves as the catalytic Proton acceptor.

Belongs to the uracil-DNA glycosylase (UDG) superfamily. UNG family.

It is found in the cytoplasm. It catalyses the reaction Hydrolyzes single-stranded DNA or mismatched double-stranded DNA and polynucleotides, releasing free uracil.. Excises uracil residues from the DNA which can arise as a result of misincorporation of dUMP residues by DNA polymerase or due to deamination of cytosine. The protein is Uracil-DNA glycosylase of Pseudomonas syringae pv. syringae (strain B728a).